The primary structure comprises 172 residues: Small ribosomal subunit protein uS5 (172 aa).

Residues 17–80 (LREKMISVNR…EQARRNMFKV (64 aa)) form the S5 DRBM domain.

It belongs to the universal ribosomal protein uS5 family. In terms of assembly, part of the 30S ribosomal subunit. Contacts proteins S4 and S8.

Functionally, with S4 and S12 plays an important role in translational accuracy. In terms of biological role, located at the back of the 30S subunit body where it stabilizes the conformation of the head with respect to the body. The chain is Small ribosomal subunit protein uS5 from Paraburkholderia phymatum (strain DSM 17167 / CIP 108236 / LMG 21445 / STM815) (Burkholderia phymatum).